Consider the following 585-residue polypeptide: Serine protease HtrA-like (585 aa).

The tract at residues 1–184 (MDNNKKQVIP…QPKDKDNDNT (184 aa)) is disordered. Residues 21-82 (YFHNVEREER…IHQQRDDKSY (62 aa)) show a composition bias toward basic and acidic residues. Polar residues predominate over residues 84–94 (QKTLNQNNQMN). Basic and acidic residues predominate over residues 95-113 (KSKDDDNKIGEESLHDVRV). The segment covering 114-124 (SSDTSTLPHQN) has biased composition (polar residues). Residues 126–139 (SIKDYDDSGNESKQ) show a composition bias toward basic and acidic residues. Polar residues predominate over residues 151 to 175 (GVNSNHTEQDSRSTQPYSSKHSYSQ). A helical transmembrane segment spans residues 224–244 (MLIIIGIIVLLLILNAIFTTV). Residues histidine 320, aspartate 350, and serine 435 each act as charge relay system in the active site. The PDZ domain maps to 516-575 (GVLIGEVKENGLGDKAGLKKGDVIVELDGKKIEDNLRYRQVIYSHYDDQKTITAKIYRNG).

This sequence belongs to the peptidase S1C family.

The protein localises to the cell membrane. This chain is Serine protease HtrA-like, found in Staphylococcus epidermidis (strain ATCC 35984 / DSM 28319 / BCRC 17069 / CCUG 31568 / BM 3577 / RP62A).